The chain runs to 205 residues: Nitrophorin-4 (205 aa).

The N-terminal stretch at 1–21 is a signal peptide; that stretch reads MKSYTSLLAVAILCLFGGVNG. 2 disulfide bridges follow: Cys-23/Cys-143 and Cys-62/Cys-192. His-80 provides a ligand contact to heme.

The protein belongs to the calycin superfamily. Nitrophorin family. Heme b serves as cofactor. As to expression, salivary gland (at protein level).

The protein localises to the secreted. The enzyme catalyses 3 nitrite + 2 H(+) = 2 nitric oxide + nitrate + H2O. Its function is as follows. Heme-based protein that delivers nitric oxide gas (NO) to the victim while feeding, resulting in vasodilation and inhibition of platelet aggregation. Reversibly binds nitric oxide (NO). Also binds tightly to histamine, which is released by the host to induce wound healing. NO release is pH dependent and linked to loop dynamics. The chain is Nitrophorin-4 from Rhodnius prolixus (Triatomid bug).